A 187-amino-acid chain; its full sequence is MPHTPDLDAAVATLARGGVIAYPTEAVWGLGCDPRQEDAVLRLLEIKRRPVDKGVIVVASGLDVLQDWIDIAALGSEQLTAVLAQWPGPHTWILPVTAQAPRWVTGDHDGLAVRISAHPVVAALCKAWGAPLVSTSANLAGEPPARSRAALDPALLARIDGVLDGEVGGLAQPTPIRDARTGQILRD.

The YrdC-like domain maps to 4-187 (TPDLDAAVAT…DARTGQILRD (184 aa)).

This sequence belongs to the SUA5 family. TsaC subfamily.

The protein localises to the cytoplasm. It catalyses the reaction L-threonine + hydrogencarbonate + ATP = L-threonylcarbamoyladenylate + diphosphate + H2O. Its function is as follows. Required for the formation of a threonylcarbamoyl group on adenosine at position 37 (t(6)A37) in tRNAs that read codons beginning with adenine. Catalyzes the conversion of L-threonine, HCO(3)(-)/CO(2) and ATP to give threonylcarbamoyl-AMP (TC-AMP) as the acyladenylate intermediate, with the release of diphosphate. The polypeptide is Threonylcarbamoyl-AMP synthase (Xanthomonas campestris pv. campestris (strain 8004)).